Reading from the N-terminus, the 180-residue chain is NADH-quinone oxidoreductase subunit I (180 aa).

4Fe-4S ferredoxin-type domains lie at 46–80 (GRIV…LQKT) and 90–119 (EFFR…LTPD). Residues cysteine 60, cysteine 63, cysteine 66, cysteine 70, cysteine 99, cysteine 102, cysteine 105, and cysteine 109 each contribute to the [4Fe-4S] cluster site.

Belongs to the complex I 23 kDa subunit family. As to quaternary structure, NDH-1 is composed of 14 different subunits. Subunits NuoA, H, J, K, L, M, N constitute the membrane sector of the complex. It depends on [4Fe-4S] cluster as a cofactor.

Its subcellular location is the cell membrane. It catalyses the reaction a quinone + NADH + 5 H(+)(in) = a quinol + NAD(+) + 4 H(+)(out). NDH-1 shuttles electrons from NADH, via FMN and iron-sulfur (Fe-S) centers, to quinones in the respiratory chain. The immediate electron acceptor for the enzyme in this species is believed to be ubiquinone. Couples the redox reaction to proton translocation (for every two electrons transferred, four hydrogen ions are translocated across the cytoplasmic membrane), and thus conserves the redox energy in a proton gradient. The sequence is that of NADH-quinone oxidoreductase subunit I from Baumannia cicadellinicola subsp. Homalodisca coagulata.